Consider the following 153-residue polypeptide: MKITITSLLFFLVMIVELASAGTLLHNGANLPSLRDNTTLTDARNVLKYLQVLGFPSNKIAATDTVGTFIIFSNRTEANTTAMTKTVSYCYRNYGHSFYFTHYKYDYFPSGISYMAKLGDATVNHTDLPHFRNNKRLTTQELNAFQHPIVEFQ.

Residues 1–21 (MKITITSLLFFLVMIVELASA) form the signal peptide.

This is an uncharacterized protein from Saccharomyces cerevisiae (strain ATCC 204508 / S288c) (Baker's yeast).